The chain runs to 241 residues: Triosephosphate isomerase (241 aa).

Position 9–11 (9–11 (NWK)) interacts with substrate. H96 functions as the Electrophile in the catalytic mechanism. Residue E165 is the Proton acceptor of the active site. Residues G171, S204, and 225–226 (GG) contribute to the substrate site.

Belongs to the triosephosphate isomerase family. In terms of assembly, homodimer.

The protein localises to the cytoplasm. The catalysed reaction is D-glyceraldehyde 3-phosphate = dihydroxyacetone phosphate. It functions in the pathway carbohydrate biosynthesis; gluconeogenesis. The protein operates within carbohydrate degradation; glycolysis; D-glyceraldehyde 3-phosphate from glycerone phosphate: step 1/1. In terms of biological role, involved in the gluconeogenesis. Catalyzes stereospecifically the conversion of dihydroxyacetone phosphate (DHAP) to D-glyceraldehyde-3-phosphate (G3P). In Prochlorococcus marinus (strain MIT 9312), this protein is Triosephosphate isomerase.